Here is a 181-residue protein sequence, read N- to C-terminus: Putative J domain-containing protein R266 (181 aa).

The 65-residue stretch at 6-70 folds into the J domain; it reads NYYQILDVDN…LKRLNYDSYL (65 aa).

In Acanthamoeba polyphaga (Amoeba), this protein is Putative J domain-containing protein R266.